Reading from the N-terminus, the 574-residue chain is MAEFANASHEVINVTLGTTLAATTKLVMPTPAKPILPVQTGVQAQQEEQSSGMTIFFSLLVLAICIILVHLLIKYRLHFLPESVAVVSLGIIMGAFIKIIEAQKLANWKEEEMFRPNMFFLLLLPPIIFESGYSLHKGNFFQNIGSITLFSVFGTAISAFIVGGGIYFLGQADVIYKLNMTDSFAFGSLISAVDPVATIAIFNALNVDPVLNMLVFGESILNDAVSIVLTNTAEGLTRENMSDVSGWQTFLQALGYFLKMFFGSAALGTLTGLISALVLKHIDLRKTPSLEFGMMIIFAYLPYGLAEGISLSGIMAILFSGIVMSHYTHHNLSPVTQILMQQTLRTVAFMCETCVFAFLGLSIFSFPHKFEMSFVIWCIVLVLFGRAVNIFPLSYLLNFFRDHKITPKMMFIMWFSGLRGAIPYALSLHLGLEPIEKRQLIGTTTIIIVLFTVLLLGGGTMPLIRLIGIEDSKARKRNKKDVNLSKTEKMGNTIESEHLSELTEGEYEAQYIKRQDLKGFMWLDAKYLNPFFTRRLTQEDLHHGRIQMKTLTNKWYEEVRQGPSGSEDDEQELL.

The next 11 membrane-spanning stretches (helical) occupy residues 53 to 73, 77 to 97, 116 to 136, 149 to 169, 184 to 204, 254 to 274, 304 to 324, 347 to 367, 373 to 393, 410 to 430, and 444 to 464; these read MTIF…HLLI, LHFL…GAFI, PNMF…YSLH, LFSV…IYFL, FAFG…IFNA, LGYF…TGLI, GLAE…GIVM, VAFM…FSFP, SFVI…IFPL, MFIM…SLHL, and TTII…MPLI.

It belongs to the monovalent cation:proton antiporter 1 (CPA1) transporter (TC 2.A.36) family.

It is found in the golgi apparatus membrane. Functionally, involved in pH regulation to eliminate acids generated by active metabolism or to counter adverse environmental conditions. Major proton extruding system driven by the inward sodium ion chemical gradient. Plays an important role in signal transduction. This Gallus gallus (Chicken) protein is Sodium/hydrogen exchanger 8.